A 275-amino-acid chain; its full sequence is Bis(5'-nucleosyl)-tetraphosphatase, symmetrical (275 aa).

It belongs to the Ap4A hydrolase family.

It carries out the reaction P(1),P(4)-bis(5'-adenosyl) tetraphosphate + H2O = 2 ADP + 2 H(+). Hydrolyzes diadenosine 5',5'''-P1,P4-tetraphosphate to yield ADP. The protein is Bis(5'-nucleosyl)-tetraphosphatase, symmetrical of Photorhabdus laumondii subsp. laumondii (strain DSM 15139 / CIP 105565 / TT01) (Photorhabdus luminescens subsp. laumondii).